A 353-amino-acid chain; its full sequence is tRNA pseudouridine synthase B (353 aa).

The active-site Nucleophile is the aspartate 39.

Belongs to the pseudouridine synthase TruB family. Type 1 subfamily.

It carries out the reaction uridine(55) in tRNA = pseudouridine(55) in tRNA. Functionally, responsible for synthesis of pseudouridine from uracil-55 in the psi GC loop of transfer RNAs. The chain is tRNA pseudouridine synthase B from Wolbachia pipientis subsp. Culex pipiens (strain wPip).